The chain runs to 61 residues: Large ribosomal subunit protein uL30 (61 aa).

The protein belongs to the universal ribosomal protein uL30 family. As to quaternary structure, part of the 50S ribosomal subunit.

This chain is Large ribosomal subunit protein uL30, found in Francisella philomiragia subsp. philomiragia (strain ATCC 25017 / CCUG 19701 / FSC 153 / O#319-036).